A 95-amino-acid chain; its full sequence is Protein TusB (95 aa).

Belongs to the DsrH/TusB family. In terms of assembly, heterohexamer, formed by a dimer of trimers. The hexameric TusBCD complex contains 2 copies each of TusB, TusC and TusD. The TusBCD complex interacts with TusE.

Its subcellular location is the cytoplasm. In terms of biological role, part of a sulfur-relay system required for 2-thiolation of 5-methylaminomethyl-2-thiouridine (mnm(5)s(2)U) at tRNA wobble positions. The sequence is that of Protein TusB from Sodalis glossinidius (strain morsitans).